A 455-amino-acid polypeptide reads, in one-letter code: Adenylosuccinate synthetase isozyme 2 (455 aa).

The disordered stretch occupies residues 1–25 (MSDSGDAQPQDGGNSSSSRGKSPSV). Over residues 12-25 (GGNSSSSRGKSPSV) the composition is skewed to low complexity. GTP is bound by residues 38-44 (GDEGKGK) and 66-68 (GHT). The active-site Proton acceptor is aspartate 39. Mg(2+) is bound by residues aspartate 39 and glycine 66. Aspartate 39 lines the substrate pocket. IMP-binding positions include 39 to 42 (DEGK), 64 to 67 (NAGH), threonine 161, arginine 175, asparagine 254, threonine 269, and arginine 333. Residue histidine 67 is the Proton donor of the active site. A substrate-binding site is contributed by 329 to 335 (VTTGRKR). Residues arginine 335, 361-363 (KLD), and 443-446 (GVGK) each bind GTP.

It belongs to the adenylosuccinate synthetase family. Homodimer. Requires Mg(2+) as cofactor.

It localises to the cytoplasm. The protein localises to the mitochondrion. It catalyses the reaction IMP + L-aspartate + GTP = N(6)-(1,2-dicarboxyethyl)-AMP + GDP + phosphate + 2 H(+). The protein operates within purine metabolism; AMP biosynthesis via de novo pathway; AMP from IMP: step 1/2. Its activity is regulated as follows. Inhibited competitively by AMP and IMP and non-competitively by fructose 1,6-bisphosphate. Plays an important role in the de novo pathway and in the salvage pathway of purine nucleotide biosynthesis. Catalyzes the first committed step in the biosynthesis of AMP from IMP. The polypeptide is Adenylosuccinate synthetase isozyme 2 (adss2) (Danio rerio (Zebrafish)).